The primary structure comprises 277 residues: Serine protease 33 (277 aa).

The N-terminal stretch at 1–24 (MRGASHLQILLLLVLGTRMQECAA) is a signal peptide. The region spanning 34–276 (IVGGRDAQDG…YSPWIQARLS (243 aa)) is the Peptidase S1 domain. A disulfide bond links Cys59 and Cys75. Catalysis depends on charge relay system residues His74 and Asp123. 3 disulfide bridges follow: Cys157-Cys234, Cys190-Cys213, and Cys224-Cys252. Catalysis depends on Ser228, which acts as the Charge relay system.

Belongs to the peptidase S1 family. In terms of processing, not glycosylated. As to expression, widely expressed.

It is found in the secreted. Its function is as follows. Serine protease that has amidolytic activity, cleaving its substrates before Arg residues. This Mus musculus (Mouse) protein is Serine protease 33 (Prss33).